The chain runs to 1169 residues: MSCTWIAFLLLLGFVSCLGFNLDAEKLTHFHMDGAEFGHSVLQYDSSWVVVGAPKEIKATNQIGGLYKCGYHTGNCEPISLQVPPEAVNISLGLSLAAATNPSWLLACGPTVHHTCRENIYLTGLCFLLSSSFKQSQNFPTAQQECPKQDQDIVFLIDGSGSISSTDFEKMLDFVKAVMSQLQRPSTRFSLMQFSDYFRVHFTFNNFISTSSPLSLLGSVRQLRGYTYTASAIKHVITELFTTQSGARQDATKVLIVITDGRKQGDNLSYDSVIPMAEAASIIRYAIGVGKAFYNEHSKQELKAIASMPSHEYVFSVENFDALKDIENQLKEKIFAIEGTETPSSSTFELEMSQEGFSAVFTPDGPVLGAVGSFSWSGGAFLYPSNMRPTFINMSQENEDMRDAYLGYSTALAFWKGVHSLILGAPRHQHTGKVVIFTQESRHWRPKSEVRGTQIGSYFGASLCSVDMDRDGSTDLVLIGVPHYYEHTRGGQVSVCPMPGVGSRWHCGTTLHGEQGHPWGRFGAALTVLGDVNGDSLADVAIGAPGEEENRGAVYIFHGASRQDIAPSPSQRISASQIPSRIQYFGQSLSGGQDLTRDGLVDLAVGSKGRVLLLRTRPILRVSPTVHFTPAEISRSVFECQEQVAPEQTLSDATVCLHIHESPKTQLGDLRSTVTFDLALDHGRLSTRAIFKETKTRALTRVKTLGLNKHCESVKLLLPACVEDSVTPITLRLNFSLVGVPISSLQNLQPMLAVDDQTYFTASLPFEKNCGADHICQDDLSVVFGFPDLKTLVVGSDLELNVDVTVSNDGEDSYGTTVTLFYPVGLSFRRVAEGQVFLRKKEDQQWQRRGQHSLHLMCDSTPDRSQGLWSTSCSSRHVIFRGGSQMTFLVTFDVSPKAELGDRLLLRARVGSENNVPGTPKTTFQLELPVKYAVYTMISSHDQFTKYLNFSTSEKEKTSVVEHRFQVNNLGQRDVPVSINFWVPIELKGEAVWTVMVSHPQNPLTQCYRNRLKPTQFDLLTHMQKSPVLDCSIADCLHLRCDIPSLGILDELYFILKGNLSFGWISQTLQKKVLLLSEAEITFNTSVYSQLPGQEAFLRAQTKTVLEMYKVHNPVPLIVGSSVGGLLLLAIITAILYKAGFFKRQYKEMLEEANGQFVSDGTPTPQVAQ.

The N-terminal stretch at 1 to 19 is a signal peptide; the sequence is MSCTWIAFLLLLGFVSCLG. Residues 20–1116 are Extracellular-facing; that stretch reads FNLDAEKLTH…EMYKVHNPVP (1097 aa). 2 FG-GAP repeats span residues 23–78 and 79–138; these read DAEK…NCEP and ISLQ…QSQN. An intrachain disulfide couples Cys-69 to Cys-76. Asn-89 is a glycosylation site (N-linked (GlcNAc...) asparagine). 2 cysteine pairs are disulfide-bonded: Cys-108–Cys-126 and Cys-116–Cys-146. Positions 152–330 constitute a VWFA domain; sequence DIVFLIDGSG…DALKDIENQL (179 aa). Mg(2+) is bound by residues Asp-158, Ser-160, Ser-162, and Asp-260. N-linked (GlcNAc...) asparagine glycosylation occurs at Asn-267. FG-GAP repeat units follow at residues 341 to 392, 393 to 444, 445 to 505, 508 to 566, and 571 to 631; these read ETPS…PTFI, NMSQ…SRHW, RPKS…GSRW, GTTL…QDIA, and QRIS…FTPA. The N-linked (GlcNAc...) asparagine glycan is linked to Asn-393. Asp-467, Asp-469, Asp-471, and Asp-475 together coordinate Ca(2+). An intrachain disulfide couples Cys-496 to Cys-507. Ca(2+)-binding residues include Asp-531, Asn-533, Asp-535, Asp-539, Asp-594, Asp-598, and Asp-602. Intrachain disulfides connect Cys-640-Cys-721 and Cys-656-Cys-711. Asn-734 carries an N-linked (GlcNAc...) asparagine glycan. 2 disulfide bridges follow: Cys-770-Cys-776 and Cys-858-Cys-873. Asn-949 is a glycosylation site (N-linked (GlcNAc...) asparagine). 2 disulfide bridges follow: Cys-1007/Cys-1031 and Cys-1036/Cys-1041. 2 N-linked (GlcNAc...) asparagine glycosylation sites follow: Asn-1059 and Asn-1084. Residues 1117–1137 traverse the membrane as a helical segment; that stretch reads LIVGSSVGGLLLLAIITAILY. Residues 1138–1169 lie on the Cytoplasmic side of the membrane; sequence KAGFFKRQYKEMLEEANGQFVSDGTPTPQVAQ. The GFFKR motif signature appears at 1140 to 1144; sequence GFFKR.

This sequence belongs to the integrin alpha chain family. As to quaternary structure, heterodimer of an alpha and a beta subunit. Alpha-X associates with beta-2.

It is found in the membrane. Integrin alpha-X/beta-2 is a receptor for fibrinogen. It recognizes the sequence G-P-R in fibrinogen. It mediates cell-cell interaction during inflammatory responses. It is especially important in monocyte adhesion and chemotaxis. The protein is Integrin alpha-X (Itgax) of Mus musculus (Mouse).